The chain runs to 251 residues: Probable transcriptional regulatory protein CC_3243 (251 aa).

It belongs to the TACO1 family.

It localises to the cytoplasm. In Caulobacter vibrioides (strain ATCC 19089 / CIP 103742 / CB 15) (Caulobacter crescentus), this protein is Probable transcriptional regulatory protein CC_3243.